The primary structure comprises 359 residues: MDSLIKLFFCLFIFLCTSLLFGEINGVEGSNQNHHLYPFRPTKLFVFGDSYADTGNIKKAFSSSWKFPYGITFPGKPAGRFSDGRVATDFLAKFVGIKSPIPYFWKDYAGKKRLQYGMNFAYGGTGVFNTQTPLPNMTTQIDIFQNILTTGDIYYPPELTSSVALVSVAGNDYSNFIALNRPASEFPAFIKQVVDQTEVNLRRIHALGVKKIAVPSLQPLGCLPPFTFVTSFQRCNETQNALVNLHNNLLQQVVAKLNNETKQSTFIILDLYNAFLTVFKNKGSNPGSTRFESPLKPCCVGVSREYNCGSVDEKGVKKYIVCDNPKTAFFWDGLHPTEEGWRSVYSVLRESLTASLIKA.

A signal peptide spans 1 to 22 (MDSLIKLFFCLFIFLCTSLLFG). S50 acts as the Nucleophile in catalysis. N136, N236, and N259 each carry an N-linked (GlcNAc...) asparagine glycan. Catalysis depends on residues D332 and H335.

Belongs to the 'GDSL' lipolytic enzyme family.

The protein resides in the secreted. This chain is GDSL esterase/lipase At5g03610, found in Arabidopsis thaliana (Mouse-ear cress).